Reading from the N-terminus, the 211-residue chain is Protein-L-isoaspartate O-methyltransferase 1 (211 aa).

Ser62 is a catalytic residue.

Belongs to the methyltransferase superfamily. L-isoaspartyl/D-aspartyl protein methyltransferase family.

Its subcellular location is the cytoplasm. The catalysed reaction is [protein]-L-isoaspartate + S-adenosyl-L-methionine = [protein]-L-isoaspartate alpha-methyl ester + S-adenosyl-L-homocysteine. In terms of biological role, catalyzes the methyl esterification of L-isoaspartyl residues in peptides and proteins that result from spontaneous decomposition of normal L-aspartyl and L-asparaginyl residues. It plays a role in the repair and/or degradation of damaged proteins. The sequence is that of Protein-L-isoaspartate O-methyltransferase 1 from Shewanella sediminis (strain HAW-EB3).